The following is a 1068-amino-acid chain: Carbamoyl phosphate synthase large chain (1068 aa).

The segment at 1 to 403 is carboxyphosphate synthetic domain; sequence MPKRTDINTI…SLQKALRGLE (403 aa). R129, R169, G175, G176, Q208, V210, E215, G241, V242, H243, Q285, and E299 together coordinate ATP. In terms of domain architecture, ATP-grasp 1 spans 133 to 328; the sequence is KEAMEKIGLS…IAKVAAKLAV (196 aa). Residues Q285, E299, and N301 each contribute to the Mg(2+) site. Q285, E299, and N301 together coordinate Mn(2+). Residues 404–548 are oligomerization domain; that stretch reads TGICGFNLMS…YSTYEEECES (145 aa). Residues 549-930 form a carbamoyl phosphate synthetic domain region; that stretch reads RPSDKKKIMI…AFLKAQLGAN (382 aa). The region spanning 673–864 is the ATP-grasp 2 domain; that stretch reads QQILHKLHLK…LAKIAARVMA (192 aa). Residues R709, H748, L750, E755, G780, I781, H782, S783, Q823, and E835 each coordinate ATP. Mg(2+)-binding residues include Q823, E835, and N837. Q823, E835, and N837 together coordinate Mn(2+). The region spanning 931–1068 is the MGS-like domain; it reads ERIPKTGKVF…SLQDLHQRLL (138 aa). An allosteric domain region spans residues 931-1068; that stretch reads ERIPKTGKVF…SLQDLHQRLL (138 aa).

Belongs to the CarB family. Composed of two chains; the small (or glutamine) chain promotes the hydrolysis of glutamine to ammonia, which is used by the large (or ammonia) chain to synthesize carbamoyl phosphate. Tetramer of heterodimers (alpha,beta)4. The cofactor is Mg(2+). Mn(2+) serves as cofactor.

The catalysed reaction is hydrogencarbonate + L-glutamine + 2 ATP + H2O = carbamoyl phosphate + L-glutamate + 2 ADP + phosphate + 2 H(+). It catalyses the reaction hydrogencarbonate + NH4(+) + 2 ATP = carbamoyl phosphate + 2 ADP + phosphate + 2 H(+). The protein operates within amino-acid biosynthesis; L-arginine biosynthesis; carbamoyl phosphate from bicarbonate: step 1/1. It participates in pyrimidine metabolism; UMP biosynthesis via de novo pathway; (S)-dihydroorotate from bicarbonate: step 1/3. Its function is as follows. Large subunit of the glutamine-dependent carbamoyl phosphate synthetase (CPSase). CPSase catalyzes the formation of carbamoyl phosphate from the ammonia moiety of glutamine, carbonate, and phosphate donated by ATP, constituting the first step of 2 biosynthetic pathways, one leading to arginine and/or urea and the other to pyrimidine nucleotides. The large subunit (synthetase) binds the substrates ammonia (free or transferred from glutamine from the small subunit), hydrogencarbonate and ATP and carries out an ATP-coupled ligase reaction, activating hydrogencarbonate by forming carboxy phosphate which reacts with ammonia to form carbamoyl phosphate. The sequence is that of Carbamoyl phosphate synthase large chain from Pasteurella multocida (strain Pm70).